A 768-amino-acid polypeptide reads, in one-letter code: MKLGKWSVLLLVGCTAAIDIPRKPFPPTGSGHKRLTFNETVVKPVIAPSSTAVEWISTAEDGDYVFQDSDGSLKIQSIVTNHTQTLVPADKVPDDAYSYWIHPNLSSVLWATNYTKQYRYSYFASYYIQDLQSFKLAPLASNQAGDIQYANWSPTGDAIAFVRANNVYVWTAKSTTQITTDGSADLFNGVPDWIYEEEILGDRHALWFSPDAEYLAFLRFNETGVPTFRVPYYMDNEEVAPPYPRELELRYPKVSQTNPTVEVRLLSRATGEVSSVSIKAFNATDLVIGEVAWLTETHSQVAVKAFNRVQDQQKVVTVDVLSLKTKTISERDGTDGWLDNALSITYIGQIGDSKAEYYIDISDESGWAHLWLFPVAGGRPMALTKGEWEVTAILSIDKQRQLVYYLSTQHHSTERHVYSVSWKTFTATPLVDDTVAAVWSASFSSQGGYYILSYRGPDVPYQELYAINSTKPLCTITSNAAVYDVLKQYTLPKISYFELRLPSGETLNVMQRLPVSFSPRKKYPILFTPYGGPGAQEVSKAWQSQTFKSYIASDPELEFVTWTVDNRGTGYKGRRFRGQVAKQLGRLEAQDQVWAAQQAAKLPFIDAEHIAIWGWSYGGYLTGKVIETDSGVFSLGVLTAPVSDWRFYDSMYTERYMKTLQENANGYNASAIWDVAGYKNVRGGVLIQHGTGDDNVHFQNAAALVDRLVGEGVSPDKLQVQWFTDSDHGIRYHGGSVFLYRQLAKRLYEEKHRKKSEGHQWSKRSLEF.

An N-terminal signal peptide occupies residues 1–17 (MKLGKWSVLLLVGCTAA). Residues asparagine 38, asparagine 81, asparagine 104, asparagine 113, asparagine 221, asparagine 282, and asparagine 468 are each glycosylated (N-linked (GlcNAc...) asparagine). Serine 616 functions as the Charge relay system in the catalytic mechanism. Residue asparagine 668 is glycosylated (N-linked (GlcNAc...) asparagine). Active-site charge relay system residues include aspartate 693 and histidine 728.

This sequence belongs to the peptidase S9B family.

The protein localises to the secreted. It carries out the reaction Release of an N-terminal dipeptide, Xaa-Yaa-|-Zaa-, from a polypeptide, preferentially when Yaa is Pro, provided Zaa is neither Pro nor hydroxyproline.. Its function is as follows. Extracellular dipeptidyl-peptidase which removes N-terminal dipeptides sequentially from polypeptides having unsubstituted N-termini provided that the penultimate residue is proline. This is Probable dipeptidyl peptidase 4 (dpp4) from Aspergillus clavatus (strain ATCC 1007 / CBS 513.65 / DSM 816 / NCTC 3887 / NRRL 1 / QM 1276 / 107).